A 767-amino-acid polypeptide reads, in one-letter code: MSGDHLHNDSQIEADFRLNDSHKHKDKHKDREHRHKEHKKDKDKDREKSKHSNSEHKDSEKKHKEKEKTKHKDGSSDKHKDKHKDRDKEKRKEEKIRAAGDAKIKKEKENGFSSPPRIKDEPEDDGYFAPPKEDIKPLKRPRDEDDADYKPKKIKTEDIKKEKKRKLEEEEDGKLKKPKNKDKDKKVAEPDNKKKKAKKEEEQKWKWWEEERYPEGIKWKFLEHKGPVFAPPYEPLPEGVKFYYDGKVMKLSPKAEEVATFFAKMLDHEYTTKEIFRKNFFKDWRKEMTNDEKNTITNLSKCDFTQMSQYFKAQSEARKQMSKEEKLKIKEENEKLLKEYGFCVMDNHRERIANFKIEPPGLFRGRGNHPKMGMLKRRIMPEDIIINCSKDAKVPSPPPGHKWKEVRHDNKVTWLVSWTENIQGSIKYIMLNPSSRIKGEKDWQKYETARRLKKCVDKIRNQYREDWKSKEMKVRQRAVALYFIDKLALRAGNEKEEGETADTVGCCSLRVEHINLHPELDGQEYVVEFDFPGKDSIRYYNKVPVEKRVFKNLQLFMENKQPEDDLFDRLNTGILNKHLQDLMEGLTAKVFRTYNASITLQQQLKELTAPDENVPAKILSYNRANRAVAILCNHQRAPPKTFEKSMMNLQSKIDAKKDQLADARKDLKSAKADAKVMKDAKTKKVVESKKKAVQRLEEQLMKLEVQATDREENKQIALGTSKLNYLDPRITVAWCKKWGVPIEKIYNKTQREKFAWAIDMTDEDYEF.

The span at 1–23 (MSGDHLHNDSQIEADFRLNDSHK) shows a compositional bias: basic and acidic residues. The disordered stretch occupies residues 1–200 (MSGDHLHNDS…DNKKKKAKKE (200 aa)). S2 carries the post-translational modification N-acetylserine. 2 positions are modified to phosphoserine: S2 and S10. The segment covering 24 to 39 (HKDKHKDREHRHKEHK) has biased composition (basic residues). Residues 40 to 110 (KDKDKDREKS…DAKIKKEKEN (71 aa)) show a composition bias toward basic and acidic residues. S59 carries the phosphoserine modification. K103 is covalently cross-linked (Glycyl lysine isopeptide (Lys-Gly) (interchain with G-Cter in SUMO2)). K105 participates in a covalent cross-link: Glycyl lysine isopeptide (Lys-Gly) (interchain with G-Cter in SUMO); alternate. A Glycyl lysine isopeptide (Lys-Gly) (interchain with G-Cter in SUMO2); alternate cross-link involves residue K105. A Phosphoserine modification is found at S114. K119 is covalently cross-linked (Glycyl lysine isopeptide (Lys-Gly) (interchain with G-Cter in SUMO); alternate). K119 participates in a covalent cross-link: Glycyl lysine isopeptide (Lys-Gly) (interchain with G-Cter in SUMO2); alternate. K119 is covalently cross-linked (Glycyl lysine isopeptide (Lys-Gly) (interchain with G-Cter in SUMO1); alternate). The segment covering 131-168 (PKEDIKPLKRPRDEDDADYKPKKIKTEDIKKEKKRKLE) has biased composition (basic and acidic residues). Glycyl lysine isopeptide (Lys-Gly) (interchain with G-Cter in SUMO2) cross-links involve residues K136 and K150. Residue K155 forms a Glycyl lysine isopeptide (Lys-Gly) (interchain with G-Cter in SUMO); alternate linkage. A Glycyl lysine isopeptide (Lys-Gly) (interchain with G-Cter in SUMO2); alternate cross-link involves residue K155. Glycyl lysine isopeptide (Lys-Gly) (interchain with G-Cter in SUMO2) cross-links involve residues K160 and K166. K174 is covalently cross-linked (Glycyl lysine isopeptide (Lys-Gly) (interchain with G-Cter in SUMO2); alternate). K174 bears the N6-acetyllysine; alternate mark. A compositionally biased stretch (basic and acidic residues) spans 181-200 (KDKDKKVAEPDNKKKKAKKE). Residue K206 forms a Glycyl lysine isopeptide (Lys-Gly) (interchain with G-Cter in SUMO2) linkage. K282 is modified (N6-acetyllysine). Residue K338 forms a Glycyl lysine isopeptide (Lys-Gly) (interchain with G-Cter in SUMO2) linkage. Interaction with DNA regions lie at residues 427 to 428 (KY) and 490 to 495 (RAGNEK). The 334-residue stretch at 434 to 767 (SSRIKGEKDW…IDMTDEDYEF (334 aa)) folds into the Topo IB-type catalytic domain. S508 bears the Phosphoserine; by CK2 mark. K551 participates in a covalent cross-link: Glycyl lysine isopeptide (Lys-Gly) (interchain with G-Cter in SUMO2). The interval 587–589 (TAK) is interaction with DNA. Residues K644, K702, and K714 each participate in a glycyl lysine isopeptide (Lys-Gly) (interchain with G-Cter in SUMO2) cross-link. Y725 serves as the catalytic O-(3'-phospho-DNA)-tyrosine intermediate.

It belongs to the type IB topoisomerase family. In terms of assembly, monomer. Interacts with ERCC6. Interacts with TPRN; TPRN interacts with a number of DNA damage response proteins, is recruited to sites of DNA damage and may play a role in DNA damage repair. In terms of processing, sumoylated. Lys-119 is the main site of sumoylation. Sumoylation plays a role in partitioning TOP1 between nucleoli and nucleoplasm. Levels are dramatically increased on camptothecin (CPT) treatment. Post-translationally, phosphorylation at Ser-508 by CK2 increases binding to supercoiled DNA and sensitivity to camptothecin.

It localises to the nucleus. The protein localises to the nucleolus. Its subcellular location is the nucleoplasm. It carries out the reaction ATP-independent breakage of single-stranded DNA, followed by passage and rejoining.. Functionally, releases the supercoiling and torsional tension of DNA introduced during the DNA replication and transcription by transiently cleaving and rejoining one strand of the DNA duplex. Introduces a single-strand break via transesterification at a target site in duplex DNA. The scissile phosphodiester is attacked by the catalytic tyrosine of the enzyme, resulting in the formation of a DNA-(3'-phosphotyrosyl)-enzyme intermediate and the expulsion of a 5'-OH DNA strand. The free DNA strand then rotates around the intact phosphodiester bond on the opposing strand, thus removing DNA supercoils. Finally, in the religation step, the DNA 5'-OH attacks the covalent intermediate to expel the active-site tyrosine and restore the DNA phosphodiester backbone. Regulates the alternative splicing of tissue factor (F3) pre-mRNA in endothelial cells. Involved in the circadian transcription of the core circadian clock component BMAL1 by altering the chromatin structure around the ROR response elements (ROREs) on the BMAL1 promoter. This Rattus norvegicus (Rat) protein is DNA topoisomerase 1 (Top1).